The chain runs to 621 residues: Chaperone protein HtpG (621 aa).

Residues 1 to 341 (MSNQEYTFQT…SEDLPLNVSR (341 aa)) are a; substrate-binding. Residues 342–547 (EILQQNKILA…GDEQNAMMAN (206 aa)) are b. The segment at 548–621 (WMRQMGQSVP…RLNSVLLKAL (74 aa)) is c.

The protein belongs to the heat shock protein 90 family. Homodimer.

Its subcellular location is the cytoplasm. Its function is as follows. Molecular chaperone. Has ATPase activity. The protein is Chaperone protein HtpG of Helicobacter pylori (strain ATCC 700392 / 26695) (Campylobacter pylori).